A 383-amino-acid chain; its full sequence is Chaperone protein DnaJ (383 aa).

One can recognise a J domain in the interval 6–71 (DYYEVLGVSK…QKRSQYDQFG (66 aa)). The CR-type zinc finger occupies 141 to 223 (GVEKKVKVKK…CKGEGVEIGE (83 aa)). Zn(2+) is bound by residues cysteine 154, cysteine 157, cysteine 171, cysteine 174, cysteine 197, cysteine 200, cysteine 211, and cysteine 214. CXXCXGXG motif repeat units lie at residues 154–161 (CSKCRGDG), 171–178 (CQTCHGTG), 197–204 (CPTCHGEG), and 211–218 (CSKCKGEG).

It belongs to the DnaJ family. In terms of assembly, homodimer. Zn(2+) is required as a cofactor.

The protein resides in the cytoplasm. In terms of biological role, participates actively in the response to hyperosmotic and heat shock by preventing the aggregation of stress-denatured proteins and by disaggregating proteins, also in an autonomous, DnaK-independent fashion. Unfolded proteins bind initially to DnaJ; upon interaction with the DnaJ-bound protein, DnaK hydrolyzes its bound ATP, resulting in the formation of a stable complex. GrpE releases ADP from DnaK; ATP binding to DnaK triggers the release of the substrate protein, thus completing the reaction cycle. Several rounds of ATP-dependent interactions between DnaJ, DnaK and GrpE are required for fully efficient folding. Also involved, together with DnaK and GrpE, in the DNA replication of plasmids through activation of initiation proteins. The chain is Chaperone protein DnaJ from Porphyromonas gingivalis (strain ATCC BAA-308 / W83).